A 321-amino-acid chain; its full sequence is Arabinan endo-1,5-alpha-L-arabinosidase A (321 aa).

The signal sequence occupies residues 1-19; that stretch reads MYSLLTALSVPLLAGLAHG. The active-site Proton acceptor is D34. N-linked (GlcNAc...) asparagine glycosylation is present at N192. E200 functions as the Proton donor in the catalytic mechanism.

This sequence belongs to the glycosyl hydrolase 43 family.

The protein resides in the secreted. It catalyses the reaction Endohydrolysis of (1-&gt;5)-alpha-arabinofuranosidic linkages in (1-&gt;5)-arabinans.. It functions in the pathway glycan metabolism; L-arabinan degradation. Its function is as follows. Endo-1,5-alpha-L-arabinanase involved in degradation of pectin. Its preferred substrate is linear 1,5-alpha-L-arabinan. The chain is Arabinan endo-1,5-alpha-L-arabinosidase A (abnA) from Aspergillus aculeatus.